Reading from the N-terminus, the 229-residue chain is 2-C-methyl-D-erythritol 4-phosphate cytidylyltransferase (229 aa).

Belongs to the IspD/TarI cytidylyltransferase family. IspD subfamily.

It carries out the reaction 2-C-methyl-D-erythritol 4-phosphate + CTP + H(+) = 4-CDP-2-C-methyl-D-erythritol + diphosphate. It participates in isoprenoid biosynthesis; isopentenyl diphosphate biosynthesis via DXP pathway; isopentenyl diphosphate from 1-deoxy-D-xylulose 5-phosphate: step 2/6. Catalyzes the formation of 4-diphosphocytidyl-2-C-methyl-D-erythritol from CTP and 2-C-methyl-D-erythritol 4-phosphate (MEP). This Neisseria meningitidis serogroup C / serotype 2a (strain ATCC 700532 / DSM 15464 / FAM18) protein is 2-C-methyl-D-erythritol 4-phosphate cytidylyltransferase.